The primary structure comprises 263 residues: Hemophilin (263 aa).

The first 20 residues, 1-20, serve as a signal peptide directing secretion; sequence MKISQLFLGLVACSTAFAYA. 4 residues coordinate heme b: His-42, Tyr-58, Ser-104, and His-105.

Monomer in solution. Interacts with host hemoglobin.

The protein localises to the secreted. Part of a high affinity heme acquisition system. Functions as a hemophore that acquires heme from human hemoglobin and delivers the heme to its cognate receptor, HphR, facilitating transport of heme across the bacterial outer membrane. Apo HphA interacts specifically with human hemoglobin and steals heme through a passive process probably due to its high affinity for heme. It can also acquire heme complexed to human serum albumin. Plays a supporting role for full virulence, acting as an accessory factor that enhances the process of heme uptake. The chain is Hemophilin from Acinetobacter baumannii.